The chain runs to 679 residues: Methyl-accepting chemotaxis protein McpB (679 aa).

Divergent domain HAMP stretches follow at residues 8-56 (AVAQ…RQLR), 63-112 (QQVE…AAHI), and 111-156 (HIAV…ERLR). The PAS domain occupies 171–213 (YNARIKSALDNVSANVMIADNDLNIIYMNRTVSEMLGRAEADI). H234 is a binding site for heme. Residues 285-287 (DRT) carry the DxT. Important for signal propagation motif. The divergent domain HAMP 4 stretch occupies residues 289–332 (EHRAEQEVSQLVQAAAAGDFSKRVEEAGKEGFFLRLAKDLNSLV). Positions 333-385 (DTADRGLRDVSRMLGALAQGDLTQRIEADYQGTFGQLKDFSNDTAQSLSRMLG) constitute an HAMP 5 domain. In terms of domain architecture, Methyl-accepting transducer spans 390–619 (AADTINTAAS…EAAAAAEAMQ (230 aa)). Disordered stretches follow at residues 405 to 425 (NAEL…TASS) and 644 to 679 (ASAR…WEEF). A compositionally biased stretch (polar residues) spans 411–425 (RTEQQASSLEETASS). Residues 670-679 (ARKEDGWEEF) show a composition bias toward basic and acidic residues. The short motif at 675-679 (GWEEF) is the GWEEF pentapeptide. Important for methylation by CheR2 element.

It belongs to the methyl-accepting chemotaxis (MCP) protein family. In terms of assembly, homodimer. The PAS domains form dimers in the presence and absence of oxygen. Interacts with the methyltransferase CheR2 via the C-terminal McpB pentapeptide GWEEF. Interacts with the methylesterase/gutaminase CheB2, which also binds to the GWEEF pentapeptide. Post-translationally, methylated by CheR2, but not by CheR1, CheR3 or WspC. Demethylated by CheB2. In vitro, can be methylated by E.coli CheR.

It localises to the cytoplasm. Chemoreceptor that plays a critical role in the virulence and pathogenesis of P.aeruginosa in a variety of hosts. Probably acts through oxygen sensing. Uses a heme-based sensor. Could be involved in chemotaxis. When expressed in E.coli, is able to sense and mediate repellent responses to oxygen, carbon monoxide and nitric oxide. This chain is Methyl-accepting chemotaxis protein McpB, found in Pseudomonas aeruginosa (strain ATCC 15692 / DSM 22644 / CIP 104116 / JCM 14847 / LMG 12228 / 1C / PRS 101 / PAO1).